Here is a 72-residue protein sequence, read N- to C-terminus: Large ribosomal subunit protein bL31 (72 aa).

Residues cysteine 16, cysteine 18, cysteine 38, and cysteine 41 each coordinate Zn(2+).

Belongs to the bacterial ribosomal protein bL31 family. Type A subfamily. Part of the 50S ribosomal subunit. Requires Zn(2+) as cofactor.

In terms of biological role, binds the 23S rRNA. The sequence is that of Large ribosomal subunit protein bL31 from Aliivibrio fischeri (strain ATCC 700601 / ES114) (Vibrio fischeri).